The chain runs to 334 residues: Nucleoid-associated protein YPK_2796 (334 aa).

Belongs to the YejK family.

It is found in the cytoplasm. It localises to the nucleoid. This Yersinia pseudotuberculosis serotype O:3 (strain YPIII) protein is Nucleoid-associated protein YPK_2796.